A 61-amino-acid polypeptide reads, in one-letter code: Metallothionein-1H (61 aa).

Met-1 is subject to N-acetylmethionine. The tract at residues 1–29 is beta; sequence MDPNCSCEAGGSCACAGSCKCKKCKCTSC. A divalent metal cation-binding residues include Cys-5, Cys-7, Cys-13, Cys-15, Cys-19, Cys-21, Cys-24, Cys-26, Cys-29, Cys-33, Cys-34, Cys-36, Cys-37, Cys-41, Cys-44, Cys-48, Cys-50, and Cys-57. Positions 30–61 are alpha; sequence KKSCCSCCPLGCAKCAQGCICKGASEKCSCCA. Residue Ser-58 is modified to Phosphoserine. 2 residues coordinate a divalent metal cation: Cys-59 and Cys-60.

It belongs to the metallothionein superfamily. Type 1 family. Monomer.

Its function is as follows. Metallothioneins have a high content of cysteine residues that bind various heavy metals; these proteins are transcriptionally regulated by both heavy metals and glucocorticoids. The polypeptide is Metallothionein-1H (MT1H) (Homo sapiens (Human)).